A 933-amino-acid chain; its full sequence is Phospholipase SGR2 (933 aa).

The span at 1–14 (MEDRETHLGTREVN) shows a compositional bias: basic and acidic residues. The disordered stretch occupies residues 1–22 (MEDRETHLGTREVNETSPDLLK). Residue serine 444 is part of the active site. 2 disordered regions span residues 475–517 (PDEE…GQDN) and 553–598 (RGGQ…ESVN). The segment covering 505-517 (QLNNPEKITGQDN) has biased composition (polar residues). The segment covering 553–563 (RGGQEDDHHDS) has biased composition (basic and acidic residues). The stretch at 593–631 (DKESVNSNNEERIKLLQDEVNSLRSKVAQLLSENARILS) forms a coiled coil. One can recognise a DDHD domain in the interval 669–868 (LEFKVDTFFA…ALFIIKHLYR (200 aa)). A disordered region spans residues 871-903 (PDGPNSPTESTEGDDSPKDSSRPHSWIDRREAD). The span at 885-902 (DSPKDSSRPHSWIDRREA) shows a compositional bias: basic and acidic residues.

Forms oligomers. Expressed in roots, hypocotyls, leaves, stems and floral buds, and, at low levels, in siliques.

Its subcellular location is the vacuole membrane. Involved in vacuolar formation or function (e.g. formation of vacuolar membrane 'bulbs'). Required for amyloplast sedimentation in the endodermis during shoot gravitropism, which are thus acting as statoliths. Particularly important for the negative gravitropism leading to leaf movement observed in darkness. This Arabidopsis thaliana (Mouse-ear cress) protein is Phospholipase SGR2 (SGR2).